The following is an 86-amino-acid chain: Anti-adapter protein IraP (86 aa).

The stretch at 1 to 36 forms a coiled coil; the sequence is MKNLIAELLFKLAQKEEESKELCAQVEALEIIVTAM.

This sequence belongs to the IraP family. As to quaternary structure, interacts with RssB.

Its subcellular location is the cytoplasm. Functionally, inhibits RpoS proteolysis by regulating RssB activity, thereby increasing the stability of the sigma stress factor RpoS especially during phosphate starvation, but also in stationary phase and during nitrogen starvation. Its effect on RpoS stability is due to its interaction with RssB, which probably blocks the interaction of RssB with RpoS, and the consequent delivery of the RssB-RpoS complex to the ClpXP protein degradation pathway. The protein is Anti-adapter protein IraP of Shigella flexneri serotype 5b (strain 8401).